Reading from the N-terminus, the 414-residue chain is 3-aminobutyryl-CoA aminotransferase (414 aa).

Lysine 261 carries the N6-(pyridoxal phosphate)lysine modification.

It belongs to the class-III pyridoxal-phosphate-dependent aminotransferase family. Homodimer. Requires pyridoxal 5'-phosphate as cofactor.

The enzyme catalyses (3S)-3-aminobutanoyl-CoA + 2-oxoglutarate = acetoacetyl-CoA + L-glutamate. Its pathway is amino-acid degradation; L-lysine degradation via acetate pathway. Functionally, 3-aminobutyryl-CoA aminotransferase that acts specifically on coenzyme A (CoA) esters and catalyzes the conversion of 3-aminobutyryl-CoA into acetoacetyl-CoA in an alternative pathway of lysine fermentation. In Cloacimonas acidaminovorans (strain Evry), this protein is 3-aminobutyryl-CoA aminotransferase (kat).